The primary structure comprises 110 residues: Large ribosomal subunit protein uL22 (110 aa).

Belongs to the universal ribosomal protein uL22 family. In terms of assembly, part of the 50S ribosomal subunit.

Its function is as follows. This protein binds specifically to 23S rRNA; its binding is stimulated by other ribosomal proteins, e.g. L4, L17, and L20. It is important during the early stages of 50S assembly. It makes multiple contacts with different domains of the 23S rRNA in the assembled 50S subunit and ribosome. Functionally, the globular domain of the protein is located near the polypeptide exit tunnel on the outside of the subunit, while an extended beta-hairpin is found that lines the wall of the exit tunnel in the center of the 70S ribosome. The sequence is that of Large ribosomal subunit protein uL22 from Verminephrobacter eiseniae (strain EF01-2).